The following is a 197-amino-acid chain: MKIPPFVLASASPARRRLLETVGIEPIVRASDFDESQIQLSEPAELVKTLAQCKAETVAPQFESALIMGCDSVLSMNGEIHGKPADTSEAIARWQIMQGNFGDLYTGHALIDLEQNRTIVKSQVTRVYFAQMSDRAILAYVATGEPLKCAGAFAIEGFGSFFVEKIEGCHSNVIGLSLPLLRHILAELGYDVTDFWQ.

The active-site Proton acceptor is Asp71.

The protein belongs to the Maf family. A divalent metal cation serves as cofactor.

The protein resides in the cytoplasm. The catalysed reaction is a ribonucleoside 5'-triphosphate + H2O = a ribonucleoside 5'-phosphate + diphosphate + H(+). It carries out the reaction a 2'-deoxyribonucleoside 5'-triphosphate + H2O = a 2'-deoxyribonucleoside 5'-phosphate + diphosphate + H(+). Nucleoside triphosphate pyrophosphatase. May have a dual role in cell division arrest and in preventing the incorporation of modified nucleotides into cellular nucleic acids. In Nostoc punctiforme (strain ATCC 29133 / PCC 73102), this protein is Nucleoside triphosphate pyrophosphatase.